A 5255-amino-acid chain; its full sequence is SCO-spondin (5255 aa).

Positions 1-18 are cleaved as a signal peptide; that stretch reads MGIVATVLLWVVTEAARG. One can recognise an EMI domain in the interval 19–111; the sequence is RWCERTEQVT…ACCAGWSGPH (93 aa). N-linked (GlcNAc...) asparagine glycans are attached at residues asparagine 97, asparagine 136, asparagine 156, and asparagine 255. In terms of domain architecture, VWFD 1 spans 192-358; that stretch reads ASCTVWAGSR…PDANPELSCS (167 aa). 2 cysteine pairs are disulfide-bonded: cysteine 194-cysteine 317 and cysteine 216-cysteine 357. In terms of domain architecture, TIL 1 spans 453–508; it reads CGHGQRYSDCVSSCPASCMAAGTAEEGHCRDDCASGCECTPGLLLDRGACIPQSAC. The VWFC 1 domain maps to 508 to 601; it reads CPCLHRGHIY…CGGHQPLSCL (94 aa). One can recognise a VWFD 2 domain in the interval 546-717; it reads AECAVLGDLH…NKYRVSTDCP (172 aa). 3 disulfides stabilise this stretch: cysteine 548–cysteine 681, cysteine 570–cysteine 716, and cysteine 592–cysteine 600. N-linked (GlcNAc...) asparagine glycosylation is present at asparagine 801. The 60-residue stretch at 809 to 868 folds into the TIL 2 domain; it reads CRGGQVYQECSSPCGRTCADLRLDGASSCPSLDNICVSGCNCPEGPVLDDGGQCVPPGVC. Residues 868 to 926 enclose the VWFC 2 domain; it reads CPCQHSSQLYPAGSKIRQGCNACMCTAGTWSCTDAPCPDAAFCPGDLVYVFGSCLRTCD. N-linked (GlcNAc...) asparagine glycans are attached at residues asparagine 931 and asparagine 972. The 171-residue stretch at 998 to 1168 folds into the VWFD 3 domain; the sequence is GTCVATGDPH…NSWRVSLLCP (171 aa). 3 cysteine pairs are disulfide-bonded: cysteine 1000–cysteine 1132, cysteine 1022–cysteine 1167, and cysteine 1043–cysteine 1050. The 57-residue stretch at 1263–1319 folds into the TIL 3 domain; it reads CDGGQEYSACGPPCPQTCRNLGLELPEHCDTMSCLEGCFCPEGKVLHEGSCIDPAEC. Asparagine 1340 carries N-linked (GlcNAc...) asparagine glycosylation. 6 consecutive LDL-receptor class A domains span residues 1362–1398, 1400–1436, 1439–1477, 1479–1515, 1515–1551, and 1555–1593; these read HCPD…EVCA, HCAP…RGCP, PCAP…AGCS, SCSV…RGCV, VCPA…AFCP, and TCAP…VRCM. Disulfide bonds link cysteine 1363-cysteine 1376, cysteine 1370-cysteine 1389, cysteine 1383-cysteine 1397, cysteine 1401-cysteine 1413, cysteine 1408-cysteine 1426, cysteine 1420-cysteine 1435, cysteine 1440-cysteine 1452, cysteine 1447-cysteine 1465, cysteine 1459-cysteine 1476, cysteine 1480-cysteine 1492, cysteine 1487-cysteine 1505, cysteine 1499-cysteine 1514, cysteine 1516-cysteine 1528, cysteine 1523-cysteine 1541, cysteine 1535-cysteine 1550, cysteine 1556-cysteine 1568, cysteine 1563-cysteine 1581, and cysteine 1575-cysteine 1592. N-linked (GlcNAc...) asparagine glycosylation is present at asparagine 1610. LDL-receptor class A domains are found at residues 1616 to 1652, 1654 to 1693, and 1699 to 1734; these read VCGP…LGCN, SCVL…DNCG, and PCPG…LACE. 3 disulfide bridges follow: cysteine 1617/cysteine 1629, cysteine 1624/cysteine 1642, and cysteine 1636/cysteine 1651. Asparagine 1652 carries N-linked (GlcNAc...) asparagine glycosylation. 6 disulfide bridges follow: cysteine 1655-cysteine 1668, cysteine 1662-cysteine 1681, cysteine 1675-cysteine 1692, cysteine 1700-cysteine 1711, cysteine 1706-cysteine 1724, and cysteine 1718-cysteine 1733. Asparagine 1713 carries an N-linked (GlcNAc...) asparagine glycan. A glycan (N-linked (GlcNAc...) asparagine) is linked at asparagine 1743. An LDL-receptor class A 10 domain is found at 1748–1790; sequence PCAEYSCRDGDCITFKQVCNGLPDCRDGDMASGWLPSDEWDCG. 6 disulfides stabilise this stretch: cysteine 1749–cysteine 1759, cysteine 1754–cysteine 1772, cysteine 1766–cysteine 1789, cysteine 1801–cysteine 1837, cysteine 1805–cysteine 1842, and cysteine 1816–cysteine 1827. 2 TSP type-1 domains span residues 1789 to 1843 and 1845 to 1903; these read CGQW…TACP and DGAW…DGCP. N-linked (GlcNAc...) asparagine glycosylation occurs at asparagine 1856. Disulfide bonds link cysteine 1857-cysteine 1897, cysteine 1861-cysteine 1902, and cysteine 1871-cysteine 1881. The 55-residue stretch at 1907–1961 folds into the TIL 4 domain; it reads CPGGLQPRPCAPCPASCADLASRAPCRREQCTPGCWCAEGLVLDGERGCVRPREC. EGF-like domains lie at 1919-1956 and 1957-1983; these read CPAS…RGCV and RPRE…CRLC. The region spanning 1961-2019 is the VWFC 3 domain; the sequence is CRCEVDGLRYWPGQRMKLNCRLCTCLDGQPRRCRHNPACSVSCSWSAWSPWGECLGPCG. The region spanning 2002-2058 is the TSP type-1 3 domain; sequence SCSWSAWSPWGECLGPCGVQSIQWSFRSPSHPGKHGTNRQCRGIYRKARRCQTEPCQ. 3 disulfides stabilise this stretch: cysteine 2003–cysteine 2042, cysteine 2014–cysteine 2018, and cysteine 2052–cysteine 2057. Positions 2058 to 2120 constitute a VWFC 4 domain; it reads QECEHQGRSR…GKGDSCCFCA (63 aa). 2 N-linked (GlcNAc...) asparagine glycosylation sites follow: asparagine 2125 and asparagine 2230. 4 disulfide bridges follow: cysteine 2162–cysteine 2310, cysteine 2328–cysteine 2339, cysteine 2335–cysteine 2352, and cysteine 2346–cysteine 2361. Residues 2162-2310 form the F5/8 type C domain; it reads CYSPLGIASL…IFLRAELLGC (149 aa). The LDL-receptor class A 11 domain maps to 2327–2362; sequence PCGTGEFWCGVSCVTASRRCDGATDCPGGADEAGCE. The interval 2352 to 2373 is disordered; the sequence is CPGGADEAGCEPPSSTTLPTHP. The segment covering 2364–2373 has biased composition (polar residues); the sequence is PSSTTLPTHP. LDL-receptor class A domains lie at 2481–2517 and 2538–2574; these read LCPP…AHCG and TCSP…SSCA. 12 disulfides stabilise this stretch: cysteine 2482–cysteine 2494, cysteine 2489–cysteine 2507, cysteine 2501–cysteine 2516, cysteine 2539–cysteine 2551, cysteine 2546–cysteine 2564, cysteine 2558–cysteine 2573, cysteine 2576–cysteine 2612, cysteine 2587–cysteine 2591, cysteine 2622–cysteine 2627, cysteine 2642–cysteine 2679, cysteine 2646–cysteine 2684, and cysteine 2657–cysteine 2669. TSP type-1 domains follow at residues 2575-2628 and 2630-2685; these read DCIL…RACP and PGAW…QPCG. Residues 2708–2750 form the TIL 5 domain; sequence PPCPQVCGDLSATSSCQSPCQEGCRCPPGLFLQEGTCVNASQC. Asparagine 2746 is a glycosylation site (N-linked (GlcNAc...) asparagine). 3 consecutive TSP type-1 domains span residues 2790–2844, 2849–2903, and 2905–2958; these read ACAW…TPCA, SSGW…APCP, and AGVW…RPCG. Cystine bridges form between cysteine 2791–cysteine 2829, cysteine 2802–cysteine 2806, cysteine 2839–cysteine 2843, cysteine 2861–cysteine 2897, cysteine 2865–cysteine 2902, cysteine 2881–cysteine 2887, cysteine 2917–cysteine 2952, cysteine 2921–cysteine 2957, and cysteine 2932–cysteine 2942. In terms of domain architecture, TIL 6 spans 2971–3020; the sequence is EECRHSEGRCPWICQDLGAGVACTAQCQPGCHCPAGLLLQNGTCVPPSHC. N-linked (GlcNAc...) asparagine glycosylation is found at asparagine 3011, asparagine 3042, and asparagine 3065. The VWFC 5 domain maps to 3020–3077; that stretch reads CLCHHRGHLYQPGDINALDTCNNCTCVTGQMVCSTETCPVPCTWSNWTAWSTCSHSCD. 2 consecutive TSP type-1 domains span residues 3060–3115 and 3117–3158; these read PCTW…QPCR and VAPW…APCP. Disulfide bonds link cysteine 3061/cysteine 3099, cysteine 3072/cysteine 3076, and cysteine 3109/cysteine 3114. The N-linked (GlcNAc...) asparagine glycan is linked to asparagine 3136. The 53-residue stretch at 3165 to 3217 folds into the TIL 7 domain; sequence CPPGKQWQACAQGAASCAELSAAPPADGSCHPGCYCPPGALLLNNECVAEAAC. One can recognise a VWFC 6 domain in the interval 3217–3275; the sequence is CPCAVDGVLYQPGDVVPQGCHNCSCIAGRVTNCSQEDCGDVDGPWTPWTPWSECSASCG. Asparagine 3238 and asparagine 3248 each carry an N-linked (GlcNAc...) asparagine glycan. One can recognise a TSP type-1 11 domain in the interval 3258–3309; the sequence is DGPWTPWTPWSECSASCGPGRQRRYRFCSAHPGVPCAEPQPQERPCARQPCH. 3 disulfide bridges follow: cysteine 3270–cysteine 3303, cysteine 3274–cysteine 3308, and cysteine 3285–cysteine 3293. Asparagine 3350, asparagine 3366, and asparagine 3392 each carry an N-linked (GlcNAc...) asparagine glycan. TSP type-1 domains follow at residues 3410-3475 and 3477-3532; these read PGAW…PPCP and DGAW…SSCP. Disulfide bonds link cysteine 3422-cysteine 3468, cysteine 3426-cysteine 3474, cysteine 3437-cysteine 3449, cysteine 3489-cysteine 3524, cysteine 3492-cysteine 3531, and cysteine 3502-cysteine 3514. The 56-residue stretch at 3534–3589 folds into the TIL 8 domain; that stretch reads CAGGLVAFTCGKPCPHSCEDLREDTACMATPRCLPACACPHGQLLQDGDCVPPELC. Asparagine 3598 and asparagine 3625 each carry an N-linked (GlcNAc...) asparagine glycan. TSP type-1 domains are found at residues 3644–3700 and 3702–3751; these read DGGW…EGCP and EEPW…HVCR. 6 disulfide bridges follow: cysteine 3656–cysteine 3693, cysteine 3660–cysteine 3699, cysteine 3671–cysteine 3683, cysteine 3714–cysteine 3745, cysteine 3718–cysteine 3750, and cysteine 3729–cysteine 3735. Asparagine 3823 and asparagine 3869 each carry an N-linked (GlcNAc...) asparagine glycan. TSP type-1 domains are found at residues 3878–3934, 3951–4004, 4018–4074, and 4076–4131; these read DGGF…PECP, EEGF…PLCS, NCSW…QACK, and DGAW…QPCD. 6 cysteine pairs are disulfide-bonded: cysteine 3890–cysteine 3928, cysteine 3894–cysteine 3933, cysteine 3906–cysteine 3918, cysteine 3963–cysteine 3998, cysteine 3967–cysteine 4003, and cysteine 3982–cysteine 3988. A disordered region spans residues 3932–3951; sequence ECPAVPTTEPGPGVAGAEEE. Asparagine 4018 carries N-linked (GlcNAc...) asparagine glycosylation. Disulfide bonds link cysteine 4019/cysteine 4055, cysteine 4030/cysteine 4034, cysteine 4068/cysteine 4073, cysteine 4088/cysteine 4125, cysteine 4092/cysteine 4130, and cysteine 4103/cysteine 4115. The TIL 9 domain maps to 4134–4189; the sequence is CPPGMALVTCANHCPRHCGDLQEGIVCREEEHCEPGCRCPNGTLEQDGGCVPLAHC. N-linked (GlcNAc...) asparagine glycosylation is found at asparagine 4174 and asparagine 4211. TSP type-1 domains lie at 4230–4282, 4322–4384, and 4386–4433; these read RCPW…GPCP, GAEH…RPCP, and ECSW…SGCS. Cystine bridges form between cysteine 4231–cysteine 4266, cysteine 4242–cysteine 4246, and cysteine 4276–cysteine 4281. An N-linked (GlcNAc...) asparagine glycan is attached at asparagine 4362. 3 disulfide bridges follow: cysteine 4387–cysteine 4417, cysteine 4398–cysteine 4400, and cysteine 4427–cysteine 4432. Asparagine 4428 carries an N-linked (GlcNAc...) asparagine glycan. Residues 4437–4492 form the TIL 10 domain; the sequence is CEPPFEFQPCSPPCARLCSTLQHPELCPAQSHCLPGCFCPQGLLEQRSACVPPEQC. Asparagine 4498 carries N-linked (GlcNAc...) asparagine glycosylation. TSP type-1 domains lie at 4537–4608 and 4610–4662; these read LPLS…DICQ and LCLW…AVCP. Disulfide bonds link cysteine 4548–cysteine 4601, cysteine 4551–cysteine 4607, cysteine 4575–cysteine 4591, cysteine 4611–cysteine 4646, cysteine 4622–cysteine 4626, and cysteine 4656–cysteine 4661. In terms of domain architecture, TIL 11 spans 4675 to 4722; sequence TTCANSCPRACADLWQHVECVQGGCKPGCRCPQGQLLQDGLCVPTAQC. 3 N-linked (GlcNAc...) asparagine glycosylation sites follow: asparagine 4730, asparagine 4747, and asparagine 4752. TSP type-1 domains are found at residues 4762–4815 and 4817–4869; these read CPSY…QPCP and GCQL…HNCT. 6 disulfide bridges follow: cysteine 4774-cysteine 4809, cysteine 4778-cysteine 4814, cysteine 4789-cysteine 4798, cysteine 4818-cysteine 4852, cysteine 4829-cysteine 4833, and cysteine 4863-cysteine 4868. N-linked (GlcNAc...) asparagine glycosylation occurs at asparagine 4867. Residues 4872–4926 enclose the TIL 12 domain; the sequence is CPRSQVHRECANACPHACADLRPQTQCLPQPCQPGCACPPGQVLQDGACVPPEEC. N-linked (GlcNAc...) asparagine glycans are attached at residues asparagine 4939 and asparagine 4970. The TSP type-1 27 domain maps to 4979-5033; sequence DCLWSPWSPWSPCSVTCGMGERLSHRHPLRQRLYEGAECLGPPVRRAACHLPDCA. Intrachain disulfides connect cysteine 4980–cysteine 5017, cysteine 4991–cysteine 4995, and cysteine 5027–cysteine 5032. 3 N-linked (GlcNAc...) asparagine glycosylation sites follow: asparagine 5081, asparagine 5122, and asparagine 5169. The VWFC 7 domain maps to 5092–5150; the sequence is CECLHQGQLHQPGSEWQEQCARCRCVDGKANCTDGCTPLSCPEGEVKVREPGRCCPVCR. Intrachain disulfides connect cysteine 5161–cysteine 5209, cysteine 5175–cysteine 5226, cysteine 5185–cysteine 5242, and cysteine 5189–cysteine 5244. Positions 5161-5248 constitute a CTCK domain; that stretch reads CRRFTELRNI…IHSCECSSCQ (88 aa).

Belongs to the thrombospondin family.

Its subcellular location is the secreted. The protein resides in the extracellular space. In terms of biological role, involved in the modulation of neuronal aggregation. May be involved in developmental events during the formation of the central nervous system. This Gallus gallus (Chicken) protein is SCO-spondin (SSPO).